A 419-amino-acid chain; its full sequence is GTPase Obg (419 aa).

Residues 1–158 (MHFVDEAFNE…FKIKTELKVL (158 aa)) enclose the Obg domain. In terms of domain architecture, OBG-type G spans 159-324 (ADIGLLGFPS…LKYKMSSFLQ (166 aa)). GTP is bound by residues 165–172 (GFPSVGKS), 190–194 (FTTIK), 211–214 (DLPG), 278–281 (NKMD), and 305–307 (SLV). The Mg(2+) site is built by S172 and T192. The OCT domain maps to 342 to 419 (TLTDNLKTIS…KICDRLFDFL (78 aa)).

It belongs to the TRAFAC class OBG-HflX-like GTPase superfamily. OBG GTPase family. In terms of assembly, monomer. Mg(2+) serves as cofactor.

It localises to the cytoplasm. Its function is as follows. An essential GTPase which binds GTP, GDP and possibly (p)ppGpp with moderate affinity, with high nucleotide exchange rates and a fairly low GTP hydrolysis rate. Plays a role in control of the cell cycle, stress response, ribosome biogenesis and in those bacteria that undergo differentiation, in morphogenesis control. The sequence is that of GTPase Obg from Aster yellows witches'-broom phytoplasma (strain AYWB).